The following is a 130-amino-acid chain: Glycine cleavage system H protein (130 aa).

The region spanning 24–106 (TVTIGITDHA…YDEGWFFKVK (83 aa)) is the Lipoyl-binding domain. At Lys-65 the chain carries N6-lipoyllysine.

The protein belongs to the GcvH family. In terms of assembly, the glycine cleavage system is composed of four proteins: P, T, L and H. (R)-lipoate is required as a cofactor.

Functionally, the glycine cleavage system catalyzes the degradation of glycine. The H protein shuttles the methylamine group of glycine from the P protein to the T protein. This chain is Glycine cleavage system H protein, found in Teredinibacter turnerae (strain ATCC 39867 / T7901).